The chain runs to 189 residues: UPF0301 protein PA14_05290 (189 aa).

The protein belongs to the UPF0301 (AlgH) family.

The sequence is that of UPF0301 protein PA14_05290 from Pseudomonas aeruginosa (strain UCBPP-PA14).